We begin with the raw amino-acid sequence, 403 residues long: Poly(rC)-binding protein 4 (403 aa).

3 consecutive KH domains span residues 17 to 67, 101 to 154, and 241 to 293; these read TLTL…TITG, PVTL…TVSG, and TSSQ…TITG.

The protein resides in the cytoplasm. Single-stranded nucleic acid binding protein that binds preferentially to oligo dC. In Homo sapiens (Human), this protein is Poly(rC)-binding protein 4 (PCBP4).